Here is a 314-residue protein sequence, read N- to C-terminus: Nucleotide-binding protein CE1710 (314 aa).

Residues M1–T29 form a disordered region. Positions S7–T29 are enriched in low complexity. G37 to S44 is a binding site for ATP. Residue D88–S91 participates in GTP binding.

Belongs to the RapZ-like family.

Its function is as follows. Displays ATPase and GTPase activities. In Corynebacterium efficiens (strain DSM 44549 / YS-314 / AJ 12310 / JCM 11189 / NBRC 100395), this protein is Nucleotide-binding protein CE1710.